The sequence spans 319 residues: 4-hydroxy-3-methylbut-2-enyl diphosphate reductase (319 aa).

Cysteine 17 serves as a coordination point for [4Fe-4S] cluster. (2E)-4-hydroxy-3-methylbut-2-enyl diphosphate-binding residues include histidine 46 and histidine 79. Residues histidine 46 and histidine 79 each contribute to the dimethylallyl diphosphate site. 2 residues coordinate isopentenyl diphosphate: histidine 46 and histidine 79. Cysteine 101 is a [4Fe-4S] cluster binding site. Histidine 129 is a (2E)-4-hydroxy-3-methylbut-2-enyl diphosphate binding site. Histidine 129 provides a ligand contact to dimethylallyl diphosphate. Histidine 129 contacts isopentenyl diphosphate. The active-site Proton donor is glutamate 131. Threonine 170 contributes to the (2E)-4-hydroxy-3-methylbut-2-enyl diphosphate binding site. Cysteine 200 lines the [4Fe-4S] cluster pocket. 4 residues coordinate (2E)-4-hydroxy-3-methylbut-2-enyl diphosphate: serine 228, serine 229, asparagine 230, and serine 273. Residues serine 228, serine 229, asparagine 230, and serine 273 each coordinate dimethylallyl diphosphate. The isopentenyl diphosphate site is built by serine 228, serine 229, asparagine 230, and serine 273.

It belongs to the IspH family. [4Fe-4S] cluster is required as a cofactor.

It carries out the reaction isopentenyl diphosphate + 2 oxidized [2Fe-2S]-[ferredoxin] + H2O = (2E)-4-hydroxy-3-methylbut-2-enyl diphosphate + 2 reduced [2Fe-2S]-[ferredoxin] + 2 H(+). It catalyses the reaction dimethylallyl diphosphate + 2 oxidized [2Fe-2S]-[ferredoxin] + H2O = (2E)-4-hydroxy-3-methylbut-2-enyl diphosphate + 2 reduced [2Fe-2S]-[ferredoxin] + 2 H(+). It functions in the pathway isoprenoid biosynthesis; dimethylallyl diphosphate biosynthesis; dimethylallyl diphosphate from (2E)-4-hydroxy-3-methylbutenyl diphosphate: step 1/1. Its pathway is isoprenoid biosynthesis; isopentenyl diphosphate biosynthesis via DXP pathway; isopentenyl diphosphate from 1-deoxy-D-xylulose 5-phosphate: step 6/6. Its function is as follows. Catalyzes the conversion of 1-hydroxy-2-methyl-2-(E)-butenyl 4-diphosphate (HMBPP) into a mixture of isopentenyl diphosphate (IPP) and dimethylallyl diphosphate (DMAPP). Acts in the terminal step of the DOXP/MEP pathway for isoprenoid precursor biosynthesis. This is 4-hydroxy-3-methylbut-2-enyl diphosphate reductase from Cereibacter sphaeroides (strain ATCC 17025 / ATH 2.4.3) (Rhodobacter sphaeroides).